We begin with the raw amino-acid sequence, 254 residues long: 3-deoxy-manno-octulosonate cytidylyltransferase (254 aa).

It belongs to the KdsB family.

The protein localises to the cytoplasm. It carries out the reaction 3-deoxy-alpha-D-manno-oct-2-ulosonate + CTP = CMP-3-deoxy-beta-D-manno-octulosonate + diphosphate. It participates in nucleotide-sugar biosynthesis; CMP-3-deoxy-D-manno-octulosonate biosynthesis; CMP-3-deoxy-D-manno-octulosonate from 3-deoxy-D-manno-octulosonate and CTP: step 1/1. In terms of biological role, activates KDO (a required 8-carbon sugar) for incorporation into bacterial lipopolysaccharide in Gram-negative bacteria. The chain is 3-deoxy-manno-octulosonate cytidylyltransferase from Lawsonia intracellularis (strain PHE/MN1-00).